We begin with the raw amino-acid sequence, 217 residues long: CASP-like protein UU4 (217 aa).

The segment covering 1 to 11 (MYTGQSDHRPE) has biased composition (basic and acidic residues). The disordered stretch occupies residues 1–21 (MYTGQSDHRPEGVGVNPGSPN). Over 1-61 (MYTGQSDHRP…VKKNINHMSG (61 aa)) the chain is Cytoplasmic. Residues 62–82 (LSLGLRVSEFVLSVIAFSLMA) form a helical membrane-spanning segment. The Extracellular segment spans residues 83–98 (SAEQNGAVYSTFTSYS). A helical transmembrane segment spans residues 99–119 (FVLAINVLVALYAIGQIILSV). The Cytoplasmic segment spans residues 120–141 (MPLVSGSAPKKLYLFITFGCDQ). A helical membrane pass occupies residues 142–162 (LSAFLLMAAGAAGASVAMLIN). Topologically, residues 163 to 187 (RKGVIDDYGSGCIDGKITVFCAHAE) are extracellular. The helical transmembrane segment at 188-208 (ASIAFTFLSFFCVMISSYLGV) threads the bilayer. Topologically, residues 209-217 (YNLAPYLIL) are cytoplasmic.

Belongs to the Casparian strip membrane proteins (CASP) family. As to quaternary structure, homodimer and heterodimers.

Its subcellular location is the cell membrane. The sequence is that of CASP-like protein UU4 from Physcomitrium patens (Spreading-leaved earth moss).